A 701-amino-acid polypeptide reads, in one-letter code: MEEDTDYRIRFSSLCFFNDHVGFHGTIKSSPSDFIVIEIDEQGQLVNKTIDEPIFKISEIQLEPNNFPKKPKLDLQNLSLEDGRNQEVHTLIKYTDGDQNHQSGSEKEDTIVDGTSKCEEKADVLSSFLDEKTHELLNNFACDVREKWLSKTELIGLPPEFSIGRILDKNQRASLHSAIRQKFPFLVTVGKNSEIVVKPNLEYKELCHLVSEEEAFDFFKYLDAKKENSKFTFKPDTNKDHRKAVHHFVNKKFGNLVETKSFSKMNCSAGNPNVVVTVRFREKAHKRGKRPLSECQEGKVIYTAFTLRKENLEMFEAIGFLAIKLGVIPSDFSYAGLKDKKAITYQAMVVRKVTPERLKNIEKEIEKKRMNVFNIRSVDDSLRLGQLKGNHFDIVIRNLKKQINDSANLRERIMEAIENVKKKGFVNYYGPQRFGKGRKVHTDQIGLALLKNEMMKAIKLFLTPEDLDDPVNRAKKYFLQTEDAKGTLSLMPEFKVRERALLEALHRFGMTEEGCIQAWFSLPHSMRIFYVHAYTSKIWNEAVSYRLETYGARVVQGDLVCLDEDIDDENFPNSKIHLVTEEEGSANMYAIHQVVLPVLGYNIQYPKNKVGQWYHDILSRDGLQTCRFKVPTLKLNIPGCYRQILKHPCNLSYQLMEDHDIDVKTKGSHIDETALSLLISFDLDASCYATVCLKEIMKHDV.

Phosphoserine is present on S79. D339 (nucleophile) is an active-site residue. Residues 424 to 647 (GFVNYYGPQR…PGCYRQILKH (224 aa)) form the TRUD domain.

Belongs to the pseudouridine synthase TruD family.

The catalysed reaction is a uridine in mRNA = a pseudouridine in mRNA. In terms of biological role, pseudouridine synthase that catalyzes pseudouridylation of mRNAs. The protein is Pseudouridylate synthase PUS7L of Homo sapiens (Human).